The chain runs to 146 residues: Globin-1 (146 aa).

A Globin domain is found at Q9–L146. Residue H101 coordinates heme b.

The protein belongs to the globin family. In terms of assembly, homodimer.

The protein resides in the cytoplasm. The chain is Globin-1 from Anadara inaequivalvis (Inequivalve ark).